Consider the following 179-residue polypeptide: ATP synthase subunit delta (179 aa).

Belongs to the ATPase delta chain family. As to quaternary structure, F-type ATPases have 2 components, F(1) - the catalytic core - and F(0) - the membrane proton channel. F(1) has five subunits: alpha(3), beta(3), gamma(1), delta(1), epsilon(1). F(0) has three main subunits: a(1), b(2) and c(10-14). The alpha and beta chains form an alternating ring which encloses part of the gamma chain. F(1) is attached to F(0) by a central stalk formed by the gamma and epsilon chains, while a peripheral stalk is formed by the delta and b chains.

The protein resides in the cell inner membrane. F(1)F(0) ATP synthase produces ATP from ADP in the presence of a proton or sodium gradient. F-type ATPases consist of two structural domains, F(1) containing the extramembraneous catalytic core and F(0) containing the membrane proton channel, linked together by a central stalk and a peripheral stalk. During catalysis, ATP synthesis in the catalytic domain of F(1) is coupled via a rotary mechanism of the central stalk subunits to proton translocation. In terms of biological role, this protein is part of the stalk that links CF(0) to CF(1). It either transmits conformational changes from CF(0) to CF(1) or is implicated in proton conduction. In Burkholderia pseudomallei (strain 1710b), this protein is ATP synthase subunit delta.